A 458-amino-acid polypeptide reads, in one-letter code: ATP synthase subunit beta (458 aa).

148–155 (GGAGVGKT) is an ATP binding site.

It belongs to the ATPase alpha/beta chains family. F-type ATPases have 2 components, CF(1) - the catalytic core - and CF(0) - the membrane proton channel. CF(1) has five subunits: alpha(3), beta(3), gamma(1), delta(1), epsilon(1). CF(0) has three main subunits: a(1), b(2) and c(9-12). The alpha and beta chains form an alternating ring which encloses part of the gamma chain. CF(1) is attached to CF(0) by a central stalk formed by the gamma and epsilon chains, while a peripheral stalk is formed by the delta and b chains.

The protein localises to the cell inner membrane. It catalyses the reaction ATP + H2O + 4 H(+)(in) = ADP + phosphate + 5 H(+)(out). In terms of biological role, produces ATP from ADP in the presence of a proton gradient across the membrane. The catalytic sites are hosted primarily by the beta subunits. In Nitrosococcus oceani (strain ATCC 19707 / BCRC 17464 / JCM 30415 / NCIMB 11848 / C-107), this protein is ATP synthase subunit beta.